A 143-amino-acid chain; its full sequence is Interferon gamma (143 aa).

Q1 is subject to Pyrrolidone carboxylic acid. Residues N25 and N97 are each glycosylated (N-linked (GlcNAc...) asparagine).

It belongs to the type II (or gamma) interferon family. Homodimer. Interacts with IFNGR1 (via extracellular domain); this interaction promotes IFNGR1 dimerization.

Its subcellular location is the secreted. Type II interferon produced by immune cells such as T-cells and NK cells that plays crucial roles in antimicrobial, antiviral, and antitumor responses by activating effector immune cells and enhancing antigen presentation. Primarily signals through the JAK-STAT pathway after interaction with its receptor IFNGR1 to affect gene regulation. Upon IFNG binding, IFNGR1 intracellular domain opens out to allow association of downstream signaling components JAK2, JAK1 and STAT1, leading to STAT1 activation, nuclear translocation and transcription of IFNG-regulated genes. Many of the induced genes are transcription factors such as IRF1 that are able to further drive regulation of a next wave of transcription. Plays a role in class I antigen presentation pathway by inducing a replacement of catalytic proteasome subunits with immunoproteasome subunits. In turn, increases the quantity, quality, and repertoire of peptides for class I MHC loading. Increases the efficiency of peptide generation also by inducing the expression of activator PA28 that associates with the proteasome and alters its proteolytic cleavage preference. Up-regulates as well MHC II complexes on the cell surface by promoting expression of several key molecules such as cathepsins B/CTSB, H/CTSH, and L/CTSL. Participates in the regulation of hematopoietic stem cells during development and under homeostatic conditions by affecting their development, quiescence, and differentiation. The chain is Interferon gamma (IFNG) from Pan troglodytes (Chimpanzee).